Reading from the N-terminus, the 251-residue chain is Ubiquinone/menaquinone biosynthesis C-methyltransferase UbiE (251 aa).

S-adenosyl-L-methionine-binding positions include threonine 74, aspartate 95, and 123 to 124; that span reads NA.

It belongs to the class I-like SAM-binding methyltransferase superfamily. MenG/UbiE family.

The enzyme catalyses a 2-demethylmenaquinol + S-adenosyl-L-methionine = a menaquinol + S-adenosyl-L-homocysteine + H(+). The catalysed reaction is a 2-methoxy-6-(all-trans-polyprenyl)benzene-1,4-diol + S-adenosyl-L-methionine = a 5-methoxy-2-methyl-3-(all-trans-polyprenyl)benzene-1,4-diol + S-adenosyl-L-homocysteine + H(+). It participates in quinol/quinone metabolism; menaquinone biosynthesis; menaquinol from 1,4-dihydroxy-2-naphthoate: step 2/2. The protein operates within cofactor biosynthesis; ubiquinone biosynthesis. In terms of biological role, methyltransferase required for the conversion of demethylmenaquinol (DMKH2) to menaquinol (MKH2) and the conversion of 2-polyprenyl-6-methoxy-1,4-benzoquinol (DDMQH2) to 2-polyprenyl-3-methyl-6-methoxy-1,4-benzoquinol (DMQH2). The chain is Ubiquinone/menaquinone biosynthesis C-methyltransferase UbiE from Shewanella oneidensis (strain ATCC 700550 / JCM 31522 / CIP 106686 / LMG 19005 / NCIMB 14063 / MR-1).